Here is a 455-residue protein sequence, read N- to C-terminus: Growth/differentiation factor 6 (455 aa).

The first 22 residues, 1 to 22 (MDTPRVLLSAVFLISFLWDLPG), serve as a signal peptide directing secretion. Positions 23-335 (FQQASISSSS…LPSPGRRRRR (313 aa)) are excised as a propeptide. The disordered stretch occupies residues 29 to 93 (SSSSSSAELG…EPPGRGPRVV (65 aa)). Over residues 45–76 (SRKEGKMQRAPRDSDAGREGQEPQPRPQDEPR) the composition is skewed to basic and acidic residues. Over residues 77–91 (AQQPRAQEPPGRGPR) the composition is skewed to low complexity. N-linked (GlcNAc...) asparagine glycosylation is present at N114. 2 disordered regions span residues 244–267 (EAEA…GFGR) and 300–351 (AEAA…KKSR). Residues 330–351 (GRRRRRTAFASRHGKRHGKKSR) are compositionally biased toward basic residues. 3 disulfides stabilise this stretch: C354/C420, C383/C452, and C387/C454.

It belongs to the TGF-beta family. Homodimer; disulfide-linked.

The protein resides in the secreted. In terms of biological role, growth factor that controls proliferation and cellular differentiation in the retina and bone formation. Plays a key role in regulating apoptosis during retinal development. Establishes dorsal-ventral positional information in the retina and controls the formation of the retinotectal map. Required for normal formation of bones and joints in the limbs, skull, digits and axial skeleton. Plays a key role in establishing boundaries between skeletal elements during development. Regulation of GDF6 expression seems to be a mechanism for evolving species-specific changes in skeletal structures. Seems to positively regulate differentiation of chondrogenic tissue through the growth factor receptors subunits BMPR1A, BMPR1B, BMPR2 and ACVR2A, leading to the activation of SMAD1-SMAD5-SMAD8 complex. The regulation of chondrogenic differentiation is inhibited by NOG. Also involved in the induction of adipogenesis from mesenchymal stem cells. This mechanism acts through the growth factor receptors subunits BMPR1A, BMPR2 and ACVR2A and the activation of SMAD1-SMAD5-SMAD8 complex and MAPK14/p38. This chain is Growth/differentiation factor 6 (GDF6), found in Homo sapiens (Human).